The chain runs to 129 residues: MIQESVATGRRKQAVSSVRLRSGNGKIDVNGKTLEQYFPLEVQRATILAPLRMLGDVNSFDLIIRVSGGGVQGQVIATRLGLARAVLQEKEDIKQELKAQGFLTRDPRKKERKKYGRKKARKSFQFSKR.

The disordered stretch occupies residues 98–129 (KAQGFLTRDPRKKERKKYGRKKARKSFQFSKR). Residues 110 to 129 (KERKKYGRKKARKSFQFSKR) are compositionally biased toward basic residues.

It belongs to the universal ribosomal protein uS9 family.

This chain is Small ribosomal subunit protein uS9, found in Chlamydia trachomatis serovar L2 (strain ATCC VR-902B / DSM 19102 / 434/Bu).